A 414-amino-acid polypeptide reads, in one-letter code: Transcriptional repressor protein YY1 (414 aa).

The interval 1-170 (MASGDTLYIA…SGGGASSGGG (170 aa)) is interaction with the SMAD1/SMAD4 complex. Over residues 32–41 (PVETIETTVV) the composition is skewed to low complexity. The interval 32 to 83 (PVETIETTVVGEEEEEDDDDEDGGGGDHGGGGGGHGHAGHHHHHHHHHHHHP) is disordered. The span at 42–55 (GEEEEEDDDDEDGG) shows a compositional bias: acidic residues. The segment covering 57–67 (GDHGGGGGGHG) has biased composition (gly residues). Over residues 68 to 83 (HAGHHHHHHHHHHHHP) the composition is skewed to basic residues. The segment at 118–260 (DDSDGLRAED…YSEYMTGKKL (143 aa)) is gly-rich region involved in interaction with HCFC1. S120 bears the Phosphoserine mark. The tract at residues 159 to 203 (GKSGGGASSGGGRVKKGGGKKSGKKSYLGGGAGAAGGGGADPGNK) is disordered. Residues 160–170 (KSGGGASSGGG) show a composition bias toward gly residues. A compositionally biased stretch (basic residues) spans 171–182 (RVKKGGGKKSGK). Glycyl lysine isopeptide (Lys-Gly) (interchain with G-Cter in SUMO2) cross-links involve residues K182 and K183. A compositionally biased stretch (gly residues) spans 186 to 199 (LGGGAGAAGGGGAD). Residues K208 and K230 each participate in a glycyl lysine isopeptide (Lys-Gly) (interchain with G-Cter in SUMO2) cross-link. S247 is subject to Phosphoserine. The involved in nuclear matrix association stretch occupies residues 257–341 (GKKLPPGGIP…KAFVESSKLK (85 aa)). Residues K286 and K288 each participate in a glycyl lysine isopeptide (Lys-Gly) (interchain with G-Cter in SUMO2) cross-link. Residues 295–414 (TIACPHKGCT…LTHAKAKNNQ (120 aa)) are binding to DNA. 3 consecutive C2H2-type zinc fingers follow at residues 296–320 (IACP…LHTH), 325–347 (HVCA…QLVH), and 353–377 (FQCT…VRIH). Zn(2+) contacts are provided by C298, C303, H316, H320, C327, C330, H343, H347, C355, C360, H373, and H377. The involved in repression of activated transcription stretch occupies residues 333–371 (AFVESSKLKRHQLVHTGEKPFQCTFEGCGKRFSLDFNLR). Positions 371-397 (RTHVRIHTGDRPYVCPFDGCNKKFAQS) are involved in masking transactivation domain. T378 is subject to Phosphothreonine. A C2H2-type 4 zinc finger spans residues 383–407 (YVCPFDGCNKKFAQSTNLKSHILTH). Zn(2+) is bound by residues C385, C390, H403, and H407. Residues K409 and K411 each participate in a glycyl lysine isopeptide (Lys-Gly) (interchain with G-Cter in SUMO2) cross-link.

The protein belongs to the YY transcription factor family. In terms of assembly, interacts with YAF2 through the region encompassing the first and second zinc fingers. Component of the chromatin remodeling INO80 complex; specifically part of a complex module associated with the DBINO domain of INO80. Interacts with EED and EZH2; the interactions are indicative for an association with the PRC2/EED-EZH2 complex. Found in a complex with SMAD1 and SMAD4. Interacts with SFMBT2. Found in a complex with YY1, SIN3A and HDAC1. Accessory component of the polycomb repressive deubiquitinase (PR-DUB) complex, at least composed of BAP1, one of ASXL1, ASXL2 or (probably) ASXL3 and one of MBD5 or MBD6; the PR-DUB core associates with a number of accessory proteins, including FOXK1, FOXK2, KDM1B, HCFC1, YY1 and OGT. Interacts (via Gly-rich region) with HCFC1; the interaction is direct. Interacts (via C-terminal zinc-finger domains) with BAP1 (via ULD domain); the interaction is direct and requires HCFC1. In terms of processing, transiently poly-ADP-ribosylated by PARP1 upon DNA damage, with the effect of decreasing affinity of YY1 to its cognate DNA binding sites. Ubiquitinated. Post-translationally, phosphorylation at Ser-120 by CK2 prevents proteolytic cleavage by caspase-7 (CASP7) during apoptosis. In terms of processing, proteolytically cleaved by caspase-7 (CASP7) in response to apoptosis. Phosphorylation at Ser-120 protects against proteolytic cleavage. Expressed in ovary and, at lower levels, in testis.

The protein resides in the nucleus. It localises to the nucleus matrix. The protein localises to the cytoplasm. Its function is as follows. Multifunctional transcription factor that exhibits positive and negative control on a large number of cellular and viral genes by binding to sites overlapping the transcription start site. Binds to the consensus sequence 5'-CCGCCATNTT-3'; some genes have been shown to contain a longer binding motif allowing enhanced binding; the initial CG dinucleotide can be methylated greatly reducing the binding affinity. The effect on transcription regulation is depending upon the context in which it binds and diverse mechanisms of action include direct activation or repression, indirect activation or repression via cofactor recruitment, or activation or repression by disruption of binding sites or conformational DNA changes. Its activity is regulated by transcription factors and cytoplasmic proteins that have been shown to abrogate or completely inhibit YY1-mediated activation or repression. Binds to the upstream conserved region (UCR) (5'-CGCCATTTT-3') of Moloney murine leukemia virus (MuLV). Acts synergistically with the SMAD1 and SMAD4 in bone morphogenetic protein (BMP)-mediated cardiac-specific gene expression. Binds to SMAD binding elements (SBEs) (5'-GTCT/AGAC-3') within BMP response element (BMPRE) of cardiac activating regions. Proposed to recruit the PRC2/EED-EZH2 complex to target genes that are transcriptional repressed. Involved in DNA repair. In vitro, binds to DNA recombination intermediate structures (Holliday junctions). Involved in spermatogenesis and may play a role in meiotic DNA double-strand break repair. Plays a role in regulating enhancer activation. Recruits the PR-DUB complex to specific gene-regulatory regions. Functionally, proposed core component of the chromatin remodeling INO80 complex which is involved in transcriptional regulation, DNA replication and probably DNA repair; proposed to target the INO80 complex to YY1-responsive elements. The protein is Transcriptional repressor protein YY1 (Yy1) of Mus musculus (Mouse).